The chain runs to 164 residues: Endoribonuclease YbeY (164 aa).

3 residues coordinate Zn(2+): histidine 117, histidine 121, and histidine 127.

It belongs to the endoribonuclease YbeY family. Zn(2+) is required as a cofactor.

It localises to the cytoplasm. Functionally, single strand-specific metallo-endoribonuclease involved in late-stage 70S ribosome quality control and in maturation of the 3' terminus of the 16S rRNA. This Mycoplasma mycoides subsp. mycoides SC (strain CCUG 32753 / NCTC 10114 / PG1) protein is Endoribonuclease YbeY.